The following is a 627-amino-acid chain: uncharacterized protein (627 aa).

2 disordered regions span residues 441 to 466 (EAVPEGPDGGGPWLEDEPGRGAQGEN) and 608 to 627 (DLRGTQFDYERGKGESTEDR). A compositionally biased stretch (basic and acidic residues) spans 615 to 627 (DYERGKGESTEDR).

This is an uncharacterized protein from Homo sapiens (Human).